Here is a 484-residue protein sequence, read N- to C-terminus: tRNA sulfurtransferase (484 aa).

The 105-residue stretch at 63-167 (QAFGERLACI…GDKLYMVTKR (105 aa)) folds into the THUMP domain. Residues 185 to 186 (LI), lysine 267, glycine 289, and glutamine 298 contribute to the ATP site. Cysteines 346 and 458 form a disulfide. One can recognise a Rhodanese domain in the interval 406–484 (IDTNEVVIDI…GYHNVKVYRP (79 aa)). The active-site Cysteine persulfide intermediate is cysteine 458.

This sequence belongs to the ThiI family.

Its subcellular location is the cytoplasm. It carries out the reaction [ThiI sulfur-carrier protein]-S-sulfanyl-L-cysteine + a uridine in tRNA + 2 reduced [2Fe-2S]-[ferredoxin] + ATP + H(+) = [ThiI sulfur-carrier protein]-L-cysteine + a 4-thiouridine in tRNA + 2 oxidized [2Fe-2S]-[ferredoxin] + AMP + diphosphate. The catalysed reaction is [ThiS sulfur-carrier protein]-C-terminal Gly-Gly-AMP + S-sulfanyl-L-cysteinyl-[cysteine desulfurase] + AH2 = [ThiS sulfur-carrier protein]-C-terminal-Gly-aminoethanethioate + L-cysteinyl-[cysteine desulfurase] + A + AMP + 2 H(+). It functions in the pathway cofactor biosynthesis; thiamine diphosphate biosynthesis. Functionally, catalyzes the ATP-dependent transfer of a sulfur to tRNA to produce 4-thiouridine in position 8 of tRNAs, which functions as a near-UV photosensor. Also catalyzes the transfer of sulfur to the sulfur carrier protein ThiS, forming ThiS-thiocarboxylate. This is a step in the synthesis of thiazole, in the thiamine biosynthesis pathway. The sulfur is donated as persulfide by IscS. This is tRNA sulfurtransferase from Shewanella sp. (strain ANA-3).